The primary structure comprises 585 residues: L-gulonolactone oxidase 3 (585 aa).

The N-terminal stretch at 1–24 (MRYSHTLQQFSILSFFVTIWTVQS) is a signal peptide. The FAD-binding PCMH-type domain occupies 51–233 (KTCHAANVTY…SKVKLSIEKA (183 aa)).

Belongs to the oxygen-dependent FAD-linked oxidoreductase family. FAD serves as cofactor.

It localises to the vacuole. It carries out the reaction L-gulono-1,4-lactone + O2 = L-ascorbate + H2O2 + H(+). Its pathway is cofactor biosynthesis; L-ascorbate biosynthesis. In terms of biological role, catalyzes the oxidation of L-gulono-1,4-lactone to ascorbic acid. L-gulono-1,4-lactone is oxidized to hydrogen peroxide and L-xylo-hexulonolactone which spontaneously isomerizes to L-ascorbate. This is L-gulonolactone oxidase 3 from Arabidopsis thaliana (Mouse-ear cress).